The following is a 433-amino-acid chain: ATP-dependent RNA helicase SUB2 (433 aa).

The Q motif signature appears at 49-77 (TGFRDFLLKPELLRAIGDCGFEHPSEVQQ). A Helicase ATP-binding domain is found at 80-255 (IPQSILGTDV…KKFMQNPLEI (176 aa)). Position 93 to 100 (93 to 100 (AKSGLGKT)) interacts with ATP. The short motif at 202 to 205 (DECD) is the DEAD box element. The 162-residue stretch at 267–428 (GLQQYYIKLE…EFPEEGVDPS (162 aa)) folds into the Helicase C-terminal domain.

This sequence belongs to the DEAD box helicase family. DECD subfamily.

It is found in the nucleus. The enzyme catalyses ATP + H2O = ADP + phosphate + H(+). Functionally, ATP-binding RNA helicase involved in transcription elongation and required for the export of mRNA out of the nucleus. SUB2 also plays a role in pre-mRNA splicing and spliceosome assembly. May be involved in rDNA and telomeric silencing, and maintenance of genome integrity. This Scheffersomyces stipitis (strain ATCC 58785 / CBS 6054 / NBRC 10063 / NRRL Y-11545) (Yeast) protein is ATP-dependent RNA helicase SUB2 (SUB2).